The primary structure comprises 508 residues: MAKEQVQAITKMEEDFAQWYTDIVKKAELVDYSSVKGCMILRPYGYALWENMQKVMDEKLKATGHENVYMPMFIPESLLQKEKDHVEGFAPEVAWVTHGGDEKLAERLCVRPTSETLFCEHFSKIVQSYNDLPKLYNQWCSVVRWEKTTRPFLRTTEFLWQEGHTIHETAEESQAETLNILNLYASFCEDYLAIPVIKGQKTEKEKFAGAKATYTIESLMHDGKALQTGTSHNFGTNFSEAFDIKFLDRNGKWQYVHQTSWGVSTRMIGGLIMVHSDNNGLVMPPKVAPVQVVIVPIAQHKEGVLAKATELQGHIQKVARVKIDASNKTPGWKFNEYEMKGIPIRLEVGPKDIEKNQVVLVRRDTKEKEFISMDQLEERIPALLEEIHNSLFNKAKVFRDENTYSVTNFEEMKKLADEKQGFIKAMWCGELACEEKLKEEVASRCMPFEQEHLAEECVCCVNKWCIGEKRINALLDRKDEKDFGLHNKCNPKSFLVLQFVSCIFKMEG.

It belongs to the class-II aminoacyl-tRNA synthetase family. ProS type 3 subfamily. As to quaternary structure, homodimer.

It localises to the cytoplasm. The catalysed reaction is tRNA(Pro) + L-proline + ATP = L-prolyl-tRNA(Pro) + AMP + diphosphate. Catalyzes the attachment of proline to tRNA(Pro) in a two-step reaction: proline is first activated by ATP to form Pro-AMP and then transferred to the acceptor end of tRNA(Pro). This is Proline--tRNA ligase 2 from Bacillus anthracis.